A 439-amino-acid chain; its full sequence is Cln5-like protein 3 (439 aa).

The signal sequence occupies residues methionine 1–serine 24. 10 N-linked (GlcNAc...) asparagine glycosylation sites follow: asparagine 93, asparagine 112, asparagine 122, asparagine 138, asparagine 168, asparagine 219, asparagine 268, asparagine 289, asparagine 304, and asparagine 359. The chain crosses the membrane as a helical span at residues isoleucine 371–glycine 391.

The protein belongs to the CLN5 family.

The protein resides in the membrane. This Dictyostelium discoideum (Social amoeba) protein is Cln5-like protein 3 (cln5lc).